Reading from the N-terminus, the 66-residue chain is MPKLKTRKSARKRFYISAKGKFVRKRAFKSHILEKKTSKRKRNLKRKMIVFKGENLALKTMLPYLR.

The protein belongs to the bacterial ribosomal protein bL35 family.

The protein resides in the plastid. It localises to the chloroplast. The sequence is that of Large ribosomal subunit protein bL35c from Guillardia theta (Cryptophyte).